Consider the following 347-residue polypeptide: Inositol 2-dehydrogenase (347 aa).

The protein belongs to the Gfo/Idh/MocA family. In terms of assembly, homotetramer.

The catalysed reaction is myo-inositol + NAD(+) = scyllo-inosose + NADH + H(+). Functionally, involved in the oxidation of myo-inositol (MI) to 2-keto-myo-inositol (2KMI or 2-inosose). This chain is Inositol 2-dehydrogenase, found in Rubrobacter xylanophilus (strain DSM 9941 / JCM 11954 / NBRC 16129 / PRD-1).